The following is a 235-amino-acid chain: Transmembrane protein 176A (235 aa).

Phosphoserine is present on Ser38. A run of 4 helical transmembrane segments spans residues 55–75, 86–106, 113–133, and 193–213; these read VASWVMQIVLGILSAVLGGFF, SGAAIWTGAVAVLAGAAAFIY, YWALLRTLLTLAAFSTAIAAL, and AMLLGVWILLLLASLTPLWLY.

It belongs to the TMEM176 family. In terms of assembly, interacts with MCOLN2.

Its subcellular location is the membrane. The polypeptide is Transmembrane protein 176A (TMEM176A) (Homo sapiens (Human)).